The primary structure comprises 585 residues: Aspartate--tRNA(Asp/Asn) ligase (585 aa).

Glutamate 175 is a binding site for L-aspartate. An aspartate region spans residues 199 to 202; that stretch reads QLFK. Arginine 221 is an L-aspartate binding site. ATP is bound by residues 221-223 and glutamine 230; that span reads RDE. Residue histidine 448 participates in L-aspartate binding. Glutamate 482 is an ATP binding site. Residue arginine 489 coordinates L-aspartate. 534 to 537 serves as a coordination point for ATP; sequence GLDR.

It belongs to the class-II aminoacyl-tRNA synthetase family. Type 1 subfamily. In terms of assembly, homodimer.

It localises to the cytoplasm. The catalysed reaction is tRNA(Asx) + L-aspartate + ATP = L-aspartyl-tRNA(Asx) + AMP + diphosphate. In terms of biological role, aspartyl-tRNA synthetase with relaxed tRNA specificity since it is able to aspartylate not only its cognate tRNA(Asp) but also tRNA(Asn). Reaction proceeds in two steps: L-aspartate is first activated by ATP to form Asp-AMP and then transferred to the acceptor end of tRNA(Asp/Asn). The protein is Aspartate--tRNA(Asp/Asn) ligase of Natranaerobius thermophilus (strain ATCC BAA-1301 / DSM 18059 / JW/NM-WN-LF).